Here is an 874-residue protein sequence, read N- to C-terminus: Bifunctional uridylyltransferase/uridylyl-removing enzyme (874 aa).

The segment at 1 to 336 is uridylyltransferase; it reads MIDTSTITNP…DNGKTVETIQ (336 aa). The uridylyl-removing stretch occupies residues 337–695; sequence LSDDFQIRGH…LSKKATRGGT (359 aa). Positions 455–577 constitute an HD domain; the sequence is VDEHSVRLIK…VRDEERLDYL (123 aa). 2 consecutive ACT domains span residues 696-779 and 802-874; these read EVFV…RAPR and TMEL…TPQD.

This sequence belongs to the GlnD family. Mg(2+) is required as a cofactor.

The catalysed reaction is [protein-PII]-L-tyrosine + UTP = [protein-PII]-uridylyl-L-tyrosine + diphosphate. It carries out the reaction [protein-PII]-uridylyl-L-tyrosine + H2O = [protein-PII]-L-tyrosine + UMP + H(+). Uridylyltransferase (UTase) activity is inhibited by glutamine, while glutamine activates uridylyl-removing (UR) activity. In terms of biological role, modifies, by uridylylation and deuridylylation, the PII regulatory proteins (GlnB and homologs), in response to the nitrogen status of the cell that GlnD senses through the glutamine level. Under low glutamine levels, catalyzes the conversion of the PII proteins and UTP to PII-UMP and PPi, while under higher glutamine levels, GlnD hydrolyzes PII-UMP to PII and UMP (deuridylylation). Thus, controls uridylylation state and activity of the PII proteins, and plays an important role in the regulation of nitrogen assimilation and metabolism. The protein is Bifunctional uridylyltransferase/uridylyl-removing enzyme of Photobacterium profundum (strain SS9).